A 388-amino-acid chain; its full sequence is Processive diacylglycerol beta-glucosyltransferase (388 aa).

This sequence belongs to the glycosyltransferase 28 family. UgtP subfamily.

It is found in the cell membrane. The catalysed reaction is a 1,2-diacyl-3-O-(beta-D-glucopyranosyl)-sn-glycerol + UDP-alpha-D-glucose = a 1,2-diacyl-3-O-(beta-D-Glc-(1-&gt;6)-beta-D-Glc)-sn-glycerol + UDP + H(+). The enzyme catalyses a 1,2-diacyl-3-O-(beta-D-Glc-(1-&gt;6)-beta-D-Glc)-sn-glycerol + UDP-alpha-D-glucose = a 1,2-diacyl-3-O-(beta-D-Glc-(1-&gt;6)-beta-D-Glc-(1-&gt;6)-beta-D-Glc)-sn-glycerol + UDP + H(+). It catalyses the reaction a 1,2-diacyl-sn-glycerol + UDP-alpha-D-glucose = a 1,2-diacyl-3-O-(beta-D-glucopyranosyl)-sn-glycerol + UDP + H(+). It participates in glycolipid metabolism; diglucosyl-diacylglycerol biosynthesis. Processive glucosyltransferase involved in the biosynthesis of both the bilayer- and non-bilayer-forming membrane glucolipids. Is able to successively transfer up to three glucosyl residues to diacylglycerol (DAG), thereby catalyzing the formation of beta-monoglucosyl-DAG (3-O-(beta-D-glucopyranosyl)-1,2-diacyl-sn-glycerol), beta-diglucosyl-DAG (3-O-(beta-D-glucopyranosyl-beta-(1-&gt;6)-D-glucopyranosyl)-1,2-diacyl-sn-glycerol) and beta-triglucosyl-DAG (3-O-(beta-D-glucopyranosyl-beta-(1-&gt;6)-D-glucopyranosyl-beta-(1-&gt;6)-D-glucopyranosyl)-1,2-diacyl-sn-glycerol). Beta-diglucosyl-DAG is the predominant glycolipid found in Bacillales and is also used as a membrane anchor for lipoteichoic acid (LTA). The sequence is that of Processive diacylglycerol beta-glucosyltransferase from Bacillus cereus (strain B4264).